A 150-amino-acid chain; its full sequence is Large ribosomal subunit protein bL9 (150 aa).

The protein belongs to the bacterial ribosomal protein bL9 family.

Its function is as follows. Binds to the 23S rRNA. The protein is Large ribosomal subunit protein bL9 of Corynebacterium glutamicum (strain R).